A 522-amino-acid polypeptide reads, in one-letter code: Bifunctional purine biosynthesis protein PurH (522 aa).

In terms of domain architecture, MGS-like spans 1 to 143 (MIRRALISVS…KNHARVAVVV (143 aa)).

This sequence belongs to the PurH family.

It carries out the reaction (6R)-10-formyltetrahydrofolate + 5-amino-1-(5-phospho-beta-D-ribosyl)imidazole-4-carboxamide = 5-formamido-1-(5-phospho-D-ribosyl)imidazole-4-carboxamide + (6S)-5,6,7,8-tetrahydrofolate. The catalysed reaction is IMP + H2O = 5-formamido-1-(5-phospho-D-ribosyl)imidazole-4-carboxamide. It functions in the pathway purine metabolism; IMP biosynthesis via de novo pathway; 5-formamido-1-(5-phospho-D-ribosyl)imidazole-4-carboxamide from 5-amino-1-(5-phospho-D-ribosyl)imidazole-4-carboxamide (10-formyl THF route): step 1/1. It participates in purine metabolism; IMP biosynthesis via de novo pathway; IMP from 5-formamido-1-(5-phospho-D-ribosyl)imidazole-4-carboxamide: step 1/1. The sequence is that of Bifunctional purine biosynthesis protein PurH from Sorangium cellulosum (strain So ce56) (Polyangium cellulosum (strain So ce56)).